The chain runs to 194 residues: Peptidyl-tRNA hydrolase (194 aa).

A tRNA-binding site is contributed by tyrosine 17. Histidine 22 functions as the Proton acceptor in the catalytic mechanism. Residues tyrosine 68, asparagine 70, and asparagine 116 each coordinate tRNA.

This sequence belongs to the PTH family. Monomer.

The protein resides in the cytoplasm. The enzyme catalyses an N-acyl-L-alpha-aminoacyl-tRNA + H2O = an N-acyl-L-amino acid + a tRNA + H(+). In terms of biological role, hydrolyzes ribosome-free peptidyl-tRNAs (with 1 or more amino acids incorporated), which drop off the ribosome during protein synthesis, or as a result of ribosome stalling. Catalyzes the release of premature peptidyl moieties from peptidyl-tRNA molecules trapped in stalled 50S ribosomal subunits, and thus maintains levels of free tRNAs and 50S ribosomes. In Pseudomonas aeruginosa (strain LESB58), this protein is Peptidyl-tRNA hydrolase.